The following is a 141-amino-acid chain: Large ribosomal subunit protein uL16 (141 aa).

Belongs to the universal ribosomal protein uL16 family. As to quaternary structure, part of the 50S ribosomal subunit.

In terms of biological role, binds 23S rRNA and is also seen to make contacts with the A and possibly P site tRNAs. The polypeptide is Large ribosomal subunit protein uL16 (Geobacillus thermodenitrificans (strain NG80-2)).